A 254-amino-acid chain; its full sequence is MGLFIETSGRGPEVVLIHGWGMHGGIWSGFVPWLTDRFRVTRIDLPGHGHSPMLADWSLETVAGAVLEAVPRPAHWVGWSLGAMVALEAARMAPGAVASLTLLCGTPRFVAEPGWPGMEAVTLMRFADGFLSDYEDACRRFLALQAWGMPNERELLRGVRSQLSGRPPPERPALLAGLEVLRHADLRGVLRELPQPVQALLGRRDRLVPVELGDALARLKTGLVSHRIDDAPHVPFLTHGERTARLIHEFIASS.

Substrate-binding positions include W20, 80-81 (SL), and 141-145 (FLALQ). S80 acts as the Nucleophile in catalysis. Residues D205 and H233 contribute to the active site. H233 serves as a coordination point for substrate.

The protein belongs to the AB hydrolase superfamily. Carboxylesterase BioH family. In terms of assembly, monomer.

The protein resides in the cytoplasm. The enzyme catalyses 6-carboxyhexanoyl-[ACP] methyl ester + H2O = 6-carboxyhexanoyl-[ACP] + methanol + H(+). The protein operates within cofactor biosynthesis; biotin biosynthesis. Its function is as follows. The physiological role of BioH is to remove the methyl group introduced by BioC when the pimeloyl moiety is complete. It allows to synthesize pimeloyl-ACP via the fatty acid synthetic pathway through the hydrolysis of the ester bonds of pimeloyl-ACP esters. The polypeptide is Pimeloyl-[acyl-carrier protein] methyl ester esterase (Methylococcus capsulatus (strain ATCC 33009 / NCIMB 11132 / Bath)).